The primary structure comprises 263 residues: Small ribosomal subunit protein uS2 (263 aa).

Residue S2 is modified to N-acetylserine. A compositionally biased stretch (acidic residues) spans 211 to 242 (EQTAEEEAEAAEGAEFEVEEEEVEQEWQEPAE). Residues 211 to 263 (EQTAEEEAEAAEGAEFEVEEEEVEQEWQEPAEADWNASAPPADWNDAANAEAF) form a disordered region. The span at 246-263 (NASAPPADWNDAANAEAF) shows a compositional bias: low complexity.

This sequence belongs to the universal ribosomal protein uS2 family. In terms of assembly, component of the small ribosomal subunit. Mature ribosomes consist of a small (40S) and a large (60S) subunit. The 40S subunit contains about 33 different proteins and 1 molecule of RNA (18S). The 60S subunit contains about 49 different proteins and 3 molecules of RNA (25S, 5.8S and 5S). Interacts with RPS21.

Its subcellular location is the cytoplasm. Its function is as follows. Required for the assembly and/or stability of the 40S ribosomal subunit. Required for the processing of the 20S rRNA-precursor to mature 18S rRNA in a late step of the maturation of 40S ribosomal subunits. In Komagataella phaffii (strain GS115 / ATCC 20864) (Yeast), this protein is Small ribosomal subunit protein uS2.